The primary structure comprises 397 residues: DNA excision repair protein ERCC-8 (397 aa).

WD repeat units lie at residues 41 to 81, 97 to 137, 184 to 224, 243 to 282, and 332 to 371; these read IHGS…RQPH, VHKY…AADV, GHRQ…GCLL, AHNGKVNGLCFTSDGLHLLTIGTDNRMRLWNSSSGDNTLV, and GHYKSVDCCVFQPNFQELYSGSRDCNILAWVPPSYEPVPD. A phosphoserine mark is found at serine 391, serine 392, and serine 393.

Part of the CSA complex (also named DCX(ERCC8) complex), a DCX E3 ubiquitin-protein ligase complex containing ERCC8, RBX1, DDB1 and CUL4A; the CSA complex interacts with RNA polymerase II; upon UV irradiation it interacts with the COP9 signalosome and preferentially with the hyperphosphorylated form of RNA polymerase II. Interacts with ERCC6/CSB (via CIM motif); promoting recruitment to lesion-stalled RNA polymerase II (Pol II). Interacts with KIAA1530/UVSSA. Interacts with a subunit of RNA polymerase II TFIIH.

Its subcellular location is the nucleus. The protein resides in the chromosome. It localises to the nucleus matrix. It participates in protein modification; protein ubiquitination. Its function is as follows. Substrate-recognition component of the CSA complex, a DCX (DDB1-CUL4-X-box) E3 ubiquitin-protein ligase complex, involved in transcription-coupled nucleotide excision repair (TC-NER), a process during which RNA polymerase II-blocking lesions are rapidly removed from the transcribed strand of active genes. Following recruitment to lesion-stalled RNA polymerase II (Pol II), the CSA complex mediates ubiquitination of Pol II subunit POLR2A/RPB1 at 'Lys-1268', a critical TC-NER checkpoint, governing RNA Pol II stability and initiating DNA damage excision by TFIIH recruitment. The CSA complex also promotes the ubiquitination and subsequent proteasomal degradation of ERCC6/CSB in a UV-dependent manner; ERCC6 degradation is essential for the recovery of RNA synthesis after transcription-coupled repair. Also plays a role in DNA double-strand breaks (DSSBs) repair by non-homologous end joining (NHEJ). The chain is DNA excision repair protein ERCC-8 from Mus musculus (Mouse).